Reading from the N-terminus, the 673-residue chain is Acetoacetyl-CoA synthetase (673 aa).

It belongs to the ATP-dependent AMP-binding enzyme family.

Its subcellular location is the cytoplasm. The protein resides in the cytosol. The enzyme catalyses acetoacetate + ATP + CoA = acetoacetyl-CoA + AMP + diphosphate. Its function is as follows. Converts acetoacetate to acetoacetyl-CoA in the cytosol. Ketone body-utilizing enzyme, responsible for the synthesis of cholesterol and fatty acids. The sequence is that of Acetoacetyl-CoA synthetase (aacs) from Danio rerio (Zebrafish).